We begin with the raw amino-acid sequence, 300 residues long: F-box protein SKIP1 (300 aa).

The region spanning 11–52 (LAPEILINIISRLTIQELWTGPMFVQKSWLTVCRDPYLWSIF) is the F-box; degenerate domain.

As to quaternary structure, part of a SCF (ASK-cullin-F-box) protein ligase complex. Interacts with SKP1A/ASK1 and SKP1B/ASK2.

Its subcellular location is the nucleus. It participates in protein modification; protein ubiquitination. Component of SCF(ASK-cullin-F-box) E3 ubiquitin ligase complexes, which may mediate the ubiquitination and subsequent proteasomal degradation of target proteins. In Arabidopsis thaliana (Mouse-ear cress), this protein is F-box protein SKIP1 (SKIP1).